A 224-amino-acid chain; its full sequence is PKHD-type hydroxylase HNE_1625 (224 aa).

The 99-residue stretch at 77–175 (KFAPPLISCS…RFVFVGWIQS (99 aa)) folds into the Fe2OG dioxygenase domain. 3 residues coordinate Fe cation: His-95, Asp-97, and His-156. Residue Arg-166 participates in 2-oxoglutarate binding.

It depends on Fe(2+) as a cofactor. L-ascorbate serves as cofactor.

The protein is PKHD-type hydroxylase HNE_1625 of Hyphomonas neptunium (strain ATCC 15444).